The following is a 464-amino-acid chain: CRISPR system endoribonuclease Csm6 (464 aa).

A CARF domain region spans residues 1 to 190; that stretch reads MEDLDALWER…LRILPNPHEA (190 aa). Residues 191-464 are HEPN domain; sequence LAEVDALFAK…LSPEPVPLGF (274 aa).

The protein belongs to the CRISPR-associated Csm6 family. In terms of assembly, homodimer. The protein forms a twisted, head-to-head dimer; the composite ssRNase active site is formed at the dimer interface. Requires Does not require a metal cofactor. as cofactor.

Non-specific ssRNase activity is allosterically activated about 1000-fold by cyclic tetraadenylate (cA4), which probably binds to its CARF domain. Its function is as follows. CRISPR (clustered regularly interspaced short palindromic repeat) is an adaptive immune system that provides protection against mobile genetic elements (viruses, transposable elements and conjugative plasmids). CRISPR clusters contain spacers, sequences complementary to antecedent mobile elements, and target invading nucleic acids. CRISPR clusters are transcribed and processed into CRISPR RNA (crRNA). The type III-A Csm effector complex binds crRNA and acts as a crRNA-guided RNase, DNase and cyclic oligoadenylate synthase; binding of target RNA cognate to the crRNA is required for all activities. This protein is not part of the Csm effector complex. In terms of biological role, a single-strand-specific endoribonuclease (ssRNase) producing free 5'-OH. Activity is approximately 1000-fold stimulated by cyclic oligoadenylate (cOA); only cyclic tetraadenylate (cA4) stimulates the ssRNase activity while linear oligoadenylates do not activate the RNase. Another study showed stimulation by linear tetraadenylate at very high concentrations, but did not examine stimulation by cA4. In Thermus thermophilus (strain ATCC 27634 / DSM 579 / HB8), this protein is CRISPR system endoribonuclease Csm6.